The primary structure comprises 500 residues: Glutamyl-tRNA(Gln) amidotransferase subunit A (500 aa).

Catalysis depends on charge relay system residues Lys-81 and Ser-161. Ser-185 acts as the Acyl-ester intermediate in catalysis.

The protein belongs to the amidase family. GatA subfamily. In terms of assembly, heterotrimer of A, B and C subunits.

It carries out the reaction L-glutamyl-tRNA(Gln) + L-glutamine + ATP + H2O = L-glutaminyl-tRNA(Gln) + L-glutamate + ADP + phosphate + H(+). Its function is as follows. Allows the formation of correctly charged Gln-tRNA(Gln) through the transamidation of misacylated Glu-tRNA(Gln) in organisms which lack glutaminyl-tRNA synthetase. The reaction takes place in the presence of glutamine and ATP through an activated gamma-phospho-Glu-tRNA(Gln). The chain is Glutamyl-tRNA(Gln) amidotransferase subunit A from Rhodospirillum rubrum (strain ATCC 11170 / ATH 1.1.1 / DSM 467 / LMG 4362 / NCIMB 8255 / S1).